The following is a 283-amino-acid chain: Phosphatidylglycerol--prolipoprotein diacylglyceryl transferase (283 aa).

The next 4 membrane-spanning stretches (helical) occupy residues 17–37 (LAVR…TFLG), 56–76 (FLTW…VLFY), 92–112 (WEGG…IWLF), and 117–137 (GIGF…GLAS). Arg-139 serves as a coordination point for a 1,2-diacyl-sn-glycero-3-phospho-(1'-sn-glycerol). Transmembrane regions (helical) follow at residues 194–214 (PSQL…VWLF), 222–242 (GQVA…AEFA), and 255–275 (GLSM…VGFV).

It belongs to the Lgt family.

The protein localises to the cell inner membrane. The catalysed reaction is L-cysteinyl-[prolipoprotein] + a 1,2-diacyl-sn-glycero-3-phospho-(1'-sn-glycerol) = an S-1,2-diacyl-sn-glyceryl-L-cysteinyl-[prolipoprotein] + sn-glycerol 1-phosphate + H(+). It participates in protein modification; lipoprotein biosynthesis (diacylglyceryl transfer). In terms of biological role, catalyzes the transfer of the diacylglyceryl group from phosphatidylglycerol to the sulfhydryl group of the N-terminal cysteine of a prolipoprotein, the first step in the formation of mature lipoproteins. In Neisseria meningitidis serogroup C (strain 053442), this protein is Phosphatidylglycerol--prolipoprotein diacylglyceryl transferase.